Reading from the N-terminus, the 350-residue chain is Galactokinase (350 aa).

Residue 15-18 participates in substrate binding; it reads EHTD. ATP contacts are provided by residues Ser47 and 99 to 105; that span reads GAGLSSS. Residues Ser105 and Glu137 each coordinate Mg(2+). The Proton acceptor role is filled by Asp149. Tyr198 lines the substrate pocket.

This sequence belongs to the GHMP kinase family. GalK subfamily.

The protein localises to the cytoplasm. It carries out the reaction alpha-D-galactose + ATP = alpha-D-galactose 1-phosphate + ADP + H(+). It participates in carbohydrate metabolism; galactose metabolism. In terms of biological role, catalyzes the transfer of the gamma-phosphate of ATP to D-galactose to form alpha-D-galactose-1-phosphate (Gal-1-P). The chain is Galactokinase from Pyrococcus horikoshii (strain ATCC 700860 / DSM 12428 / JCM 9974 / NBRC 100139 / OT-3).